The sequence spans 244 residues: Small ribosomal subunit protein uS2 (244 aa).

This sequence belongs to the universal ribosomal protein uS2 family.

This chain is Small ribosomal subunit protein uS2, found in Halalkalibacterium halodurans (strain ATCC BAA-125 / DSM 18197 / FERM 7344 / JCM 9153 / C-125) (Bacillus halodurans).